Consider the following 293-residue polypeptide: Nucleotide-binding protein HRM2_27900 (293 aa).

11–18 (GLSGSGKS) is an ATP binding site. 62-65 (DIRA) lines the GTP pocket.

It belongs to the RapZ-like family.

In terms of biological role, displays ATPase and GTPase activities. The polypeptide is Nucleotide-binding protein HRM2_27900 (Desulforapulum autotrophicum (strain ATCC 43914 / DSM 3382 / VKM B-1955 / HRM2) (Desulfobacterium autotrophicum)).